A 606-amino-acid polypeptide reads, in one-letter code: Protein couch potato (606 aa).

Residues 81–105 (IKRRPTLPQTPASAPQVLSPSPKRQ) carry the Nuclear localization signal motif. Tandem repeats lie at residues 91–95 (PASAP), 109–113 (AVSVL), 114–118 (PVTVP), 122–126 (PVSVP), 128–132 (PVSVP), 134–138 (PVSVK), and 159–163 (PISHP). Positions 91-164 (PASAPQVLSP…SHSHPISHPH (74 aa)) are 7 X 5 AA approximate repeats of P-V-S-V-P. Disordered regions lie at residues 147–166 (QIAH…PHHH), 282–311 (QQQQ…AGAA), 324–365 (VPTT…TSAA), and 388–410 (PATS…NSNS). Positions 344–365 (SNSATASAPTTPSPAGSVTSAA) are enriched in low complexity. Positions 442–524 (RTLFVSGLPM…QTIRLEFAKS (83 aa)) constitute an RRM domain.

In terms of tissue distribution, expressed in neural precursors and their daughter cells in the embryonic peripheral nervous system. Less abundant in a number of glial cells in the peripheral and central nervous systems and also present at low levels in the developing gut.

The protein localises to the nucleus. Functionally, may play a role in the development or function of the peripheral nervous system by regulating the processing of nervous system-specific transcripts. The polypeptide is Protein couch potato (cpo) (Drosophila melanogaster (Fruit fly)).